An 890-amino-acid chain; its full sequence is Probable LRR receptor-like serine/threonine-protein kinase At1g51860 (890 aa).

The first 23 residues, 1-23, serve as a signal peptide directing secretion; the sequence is MKSLHWFLHLLIIAFTVLRSVEA. Over 24–513 the chain is Extracellular; it reads QNQAGFISLD…KESKKVPMVA (490 aa). Asn-49, Asn-96, Asn-142, Asn-181, Asn-256, Asn-285, Asn-289, Asn-295, Asn-312, Asn-332, Asn-340, Asn-402, and Asn-419 each carry an N-linked (GlcNAc...) asparagine glycan. 3 LRR repeats span residues 412–435, 436–458, and 460–481; these read RIIS…SKLT, LLTV…FAEM, and SLKL…PDSL. N-linked (GlcNAc...) asparagine glycosylation is found at Asn-465, Asn-473, and Asn-497. A helical transmembrane segment spans residues 514 to 534; the sequence is IAASVAGVFALLVILAIFFVI. The Cytoplasmic portion of the chain corresponds to 535–890; it reads KRKNVKAHKS…STSDFAPGAR (356 aa). Residue Thr-575 is modified to Phosphothreonine. The 273-residue stretch at 584-856 folds into the Protein kinase domain; that stretch reads NNFERVLGKG…HVVMELNDCV (273 aa). ATP-binding positions include 590-598 and Lys-611; that span reads LGKGGFGTV. A Phosphotyrosine modification is found at Tyr-656. The active-site Proton acceptor is Asp-708. At Ser-742 the chain carries Phosphoserine. Thr-743 and Thr-748 each carry phosphothreonine. The residue at position 756 (Tyr-756) is a Phosphotyrosine.

The protein belongs to the protein kinase superfamily. Ser/Thr protein kinase family.

The protein localises to the membrane. It carries out the reaction L-seryl-[protein] + ATP = O-phospho-L-seryl-[protein] + ADP + H(+). The catalysed reaction is L-threonyl-[protein] + ATP = O-phospho-L-threonyl-[protein] + ADP + H(+). The protein is Probable LRR receptor-like serine/threonine-protein kinase At1g51860 of Arabidopsis thaliana (Mouse-ear cress).